A 627-amino-acid chain; its full sequence is Probable inactive L-type lectin-domain containing receptor kinase III.1 (627 aa).

The first 23 residues, 1 to 23, serve as a signal peptide directing secretion; it reads MITFKSIALTIIFLSYFVSCVSS. Residues 24-303 are Extracellular-facing; it reads QRETKFLNHG…STEKKSNNTM (280 aa). The interval 26–262 is legume-lectin like; that stretch reads ETKFLNHGFL…SHFVLGWSFN (237 aa). 7 N-linked (GlcNAc...) asparagine glycosylation sites follow: Asn57, Asn78, Asn127, Asn184, Asn202, Asn209, and Asn230. A disordered region spans residues 272-297; sequence ITKLPSLPDPPPTLSPSPSPPVSTEK. The segment covering 278–292 has biased composition (pro residues); that stretch reads LPDPPPTLSPSPSPP. Asn300 carries N-linked (GlcNAc...) asparagine glycosylation. Residues 304–324 traverse the membrane as a helical segment; it reads LIIIVAASATVALMILIFSGF. The Cytoplasmic portion of the chain corresponds to 325–627; that stretch reads WFLRRDKIFF…PHDDYLFYGV (303 aa). A Protein kinase domain is found at 353-623; sequence FDNSKLLGER…TEALPHDDYL (271 aa). ATP-binding positions include 359–367 and Lys381; that span reads LGERNSGSF.

The protein in the C-terminal section; belongs to the protein kinase superfamily. Ser/Thr protein kinase family. This sequence in the N-terminal section; belongs to the leguminous lectin family.

Its subcellular location is the cell membrane. In Arabidopsis thaliana (Mouse-ear cress), this protein is Probable inactive L-type lectin-domain containing receptor kinase III.1 (LECRK31).